We begin with the raw amino-acid sequence, 121 residues long: Large ribosomal subunit protein uL14 (121 aa).

The protein belongs to the universal ribosomal protein uL14 family. In terms of assembly, part of the 50S ribosomal subunit. Forms a cluster with proteins L3 and L19. In the 70S ribosome, L14 and L19 interact and together make contacts with the 16S rRNA in bridges B5 and B8.

Binds to 23S rRNA. Forms part of two intersubunit bridges in the 70S ribosome. This is Large ribosomal subunit protein uL14 from Bacteroides fragilis (strain ATCC 25285 / DSM 2151 / CCUG 4856 / JCM 11019 / LMG 10263 / NCTC 9343 / Onslow / VPI 2553 / EN-2).